A 458-amino-acid polypeptide reads, in one-letter code: Putative U-box domain-containing protein 46 (458 aa).

In terms of domain architecture, U-box spans 71–144 (EVPKEFICTL…TQWCLVNKYD (74 aa)). ARM repeat units follow at residues 241–281 (ESNK…SLSA) and 283–322 (DSNKIIIGNSEAVKALIDLIEEGDLLATKEATSTVFNLCI).

The catalysed reaction is S-ubiquitinyl-[E2 ubiquitin-conjugating enzyme]-L-cysteine + [acceptor protein]-L-lysine = [E2 ubiquitin-conjugating enzyme]-L-cysteine + N(6)-ubiquitinyl-[acceptor protein]-L-lysine.. Its pathway is protein modification; protein ubiquitination. In terms of biological role, functions as an E3 ubiquitin ligase. This is Putative U-box domain-containing protein 46 (PUB46) from Arabidopsis thaliana (Mouse-ear cress).